The chain runs to 347 residues: Geranylgeranyl pyrophosphate synthase 7, chloroplastic (347 aa).

The transit peptide at 1-39 (MTTLNLSIFPSVKISSSASIPGFIKIQPFLLRRKLSTVL) directs the protein to the chloroplast. Isopentenyl diphosphate contacts are provided by K95, R98, and H127. The Mg(2+) site is built by D134 and D140. R145 contacts dimethylallyl diphosphate. Residue R146 participates in isopentenyl diphosphate binding. Dimethylallyl diphosphate contacts are provided by K232, T233, Q270, K287, and K297.

The protein belongs to the FPP/GGPP synthase family. As to quaternary structure, monomer. Mg(2+) serves as cofactor.

The protein localises to the plastid. The protein resides in the chloroplast. The catalysed reaction is isopentenyl diphosphate + dimethylallyl diphosphate = (2E)-geranyl diphosphate + diphosphate. It carries out the reaction isopentenyl diphosphate + (2E)-geranyl diphosphate = (2E,6E)-farnesyl diphosphate + diphosphate. The enzyme catalyses isopentenyl diphosphate + (2E,6E)-farnesyl diphosphate = (2E,6E,10E)-geranylgeranyl diphosphate + diphosphate. Its pathway is isoprenoid biosynthesis; farnesyl diphosphate biosynthesis; farnesyl diphosphate from geranyl diphosphate and isopentenyl diphosphate: step 1/1. The protein operates within isoprenoid biosynthesis; geranyl diphosphate biosynthesis; geranyl diphosphate from dimethylallyl diphosphate and isopentenyl diphosphate: step 1/1. It functions in the pathway isoprenoid biosynthesis; geranylgeranyl diphosphate biosynthesis; geranylgeranyl diphosphate from farnesyl diphosphate and isopentenyl diphosphate: step 1/1. Catalyzes the trans-addition of the three molecules of IPP onto DMAPP to form geranylgeranyl pyrophosphate. This Arabidopsis thaliana (Mouse-ear cress) protein is Geranylgeranyl pyrophosphate synthase 7, chloroplastic.